Consider the following 101-residue polypeptide: NAD(P)H-quinone oxidoreductase subunit 4L, chloroplastic (101 aa).

Transmembrane regions (helical) follow at residues 2–22 (MLEHVLVLSAYLFSIGIYGLI), 32–52 (MCLELILNAVNINLVTFSDLF), and 61–81 (IFSIFVIAIAAAEAAIGPAIV).

Belongs to the complex I subunit 4L family. As to quaternary structure, NDH is composed of at least 16 different subunits, 5 of which are encoded in the nucleus.

The protein resides in the plastid. It is found in the chloroplast thylakoid membrane. It carries out the reaction a plastoquinone + NADH + (n+1) H(+)(in) = a plastoquinol + NAD(+) + n H(+)(out). The enzyme catalyses a plastoquinone + NADPH + (n+1) H(+)(in) = a plastoquinol + NADP(+) + n H(+)(out). NDH shuttles electrons from NAD(P)H:plastoquinone, via FMN and iron-sulfur (Fe-S) centers, to quinones in the photosynthetic chain and possibly in a chloroplast respiratory chain. The immediate electron acceptor for the enzyme in this species is believed to be plastoquinone. Couples the redox reaction to proton translocation, and thus conserves the redox energy in a proton gradient. This Illicium oligandrum (Star anise) protein is NAD(P)H-quinone oxidoreductase subunit 4L, chloroplastic.